The following is a 236-amino-acid chain: uncharacterized protein (236 aa).

The signal sequence occupies residues 1-26 (MTNTWNRLALLIFAVLSLLVAGELQA).

Belongs to the periplasmic pilus chaperone family.

The protein localises to the periplasm. Functionally, part of the elfADCG-ycbUVF fimbrial operon, which promotes adhesion of bacteria to different abiotic surfaces. Could be required for the biogenesis of fimbriae. This is an uncharacterized protein from Escherichia coli (strain K12).